Here is a 107-residue protein sequence, read N- to C-terminus: U1-lycotoxin-Ls1b (107 aa).

The signal sequence occupies residues 1–20 (MMKVLVVVALLVTLISYSSS). A propeptide spanning residues 21–41 (EGIDDLEADELLSLMADEQTR) is cleaved from the precursor. 4 disulfide bridges follow: C44–C59, C51–C68, C58–C86, and C70–C84.

Belongs to the neurotoxin 19 (CSTX) family. 04 (U1-Lctx) subfamily. In terms of tissue distribution, expressed by the venom gland.

The protein resides in the secreted. This chain is U1-lycotoxin-Ls1b, found in Lycosa singoriensis (Wolf spider).